A 3088-amino-acid polypeptide reads, in one-letter code: Protein prune homolog 2 (3088 aa).

Met1 bears the N-acetylmethionine mark. Positions 109–111 match the DHH motif motif; sequence GSS. Disordered regions lie at residues 433-468, 490-628, 673-759, 771-795, 846-909, 952-1080, 1192-1211, 1231-1371, 1413-1452, 1472-1491, 1515-1585, 1632-1698, 1741-1768, 1782-1813, 2089-2114, 2173-2215, 2240-2260, 2492-2542, 2589-2667, 2687-2710, 2814-2833, and 2841-2875; these read IRSSRSSKESSVFLSDDSPVGEGAGPHHTLLPGLDS, HFDL…EPAS, SSEQ…QGTN, SGRSPTAMPEPWGNPTDDGEPAAVA, SELL…PKTR, SNLG…SSYD, SDEHTKDSAPSEHHTLNEKS, SFML…LVAS, RDVQTGMSADNLQPKDTHEKHLMSQRNSGETTETSDGMNF, LEPENVGGGPPHRVPRSLDF, VKGS…QESE, DSFS…EESI, LDSSEPAENENKSNPFCDNQQSSPDPWT, VEKEKRSSPETGTTGDVAWQISPKASFPKNED, ILTHCEHDSNSQASDSPDICHDSEAK, YQAD…PDMA, QEPTPEGDGSWISDSFSPESQ, SDLP…KNED, TQLA…SELG, ALEEASGPVSQSQKSKSRGRAGPD, QSEGSILSDDNLDSPDEIDI, and PDEADSFEYTGHDPTANKDSGQESESIPEYTAEEE. The span at 503 to 512 shows a compositional bias: low complexity; sequence SGQSQQSSHS. Over residues 562–582 the composition is skewed to basic and acidic residues; it reads SLVEHDEEFVQRQDSPRDNSE. Composition is skewed to polar residues over residues 613-625 and 673-684; these read MNSLVESSPSTEE and SSEQESVFQSPE. The segment covering 685–699 has biased composition (basic and acidic residues); it reads SWKEHKPSSIDRRAS. Residues 750 to 759 show a composition bias toward polar residues; sequence LPNTSPQGTN. Over residues 846 to 857 the composition is skewed to polar residues; sequence SELLDNSPSEIN. The segment covering 865–876 has biased composition (basic and acidic residues); it reads WGKKNNDSRDHI. A compositionally biased stretch (polar residues) spans 881–894; sequence NPSSDLDHTWTNSK. A compositionally biased stretch (basic and acidic residues) spans 895-909; the sequence is PPKEDQNGLVDPKTR. Over residues 964–977 the composition is skewed to low complexity; sequence DTNYSTSDSYTSPT. Over residues 980 to 1000 the composition is skewed to basic and acidic residues; the sequence is GDEKETEHKPFAKEEGFESKD. Composition is skewed to polar residues over residues 1001–1027 and 1037–1048; these read GNSTAEETDIPPQSLQQSSRNRISSGP and HTDNSSEINTTH. 5 stretches are compositionally biased toward basic and acidic residues: residues 1049–1062, 1192–1208, 1282–1293, 1314–1339, and 1425–1434; these read NLDENELKTEHTDG, SDEHTKDSAPSEHHTLN, HLDKQDTERETL, DPWKGHGDGQSESEKEAQGATDRGHL, and QPKDTHEKHL. Residues 1436 to 1450 are compositionally biased toward polar residues; the sequence is SQRNSGETTETSDGM. Polar residues predominate over residues 1537–1585; it reads SSEYTHSSASSPELNDSSVALSSWGQQPSSGYQEENQGNWSEQNHQESE. Over residues 1687–1698 the composition is skewed to acidic residues; it reads SDDDSVGGEESI. Positions 1752–1768 are enriched in polar residues; it reads KSNPFCDNQQSSPDPWT. Basic and acidic residues-rich tracts occupy residues 2516-2542 and 2604-2622; these read EKTIPTKEPEQIKSEYKEERCTEKNED and NERKGLSAEKMSSKSDTRS. The span at 2623–2632 shows a compositional bias: polar residues; that stretch reads SFESPAQDQS. The span at 2823–2833 shows a compositional bias: acidic residues; sequence DNLDSPDEIDI. The 162-residue stretch at 2895-3056 folds into the CRAL-TRIO domain; sequence DMKVIEPYRR…SIIKLDEELR (162 aa).

Belongs to the PPase class C family. Prune subfamily. A high level of expression seen in the nervous system (brain, cerebellum and spinal cord) as well as adrenal gland. Expressed at high levels in noneuroblastoma, rhabdomyosarcoma, melanoma and some osteosarcoma cell lines, whereas at only low levels in cancer cell lines of liver, breast, thyroid and colon. Expression is significantly higher in favorable tumors than aggressive ones.

The protein localises to the cytoplasm. Functionally, may play an important role in regulating differentiation, survival and aggressiveness of the tumor cells. In Homo sapiens (Human), this protein is Protein prune homolog 2 (PRUNE2).